A 404-amino-acid polypeptide reads, in one-letter code: Keratin, type I cuticular Ha3-I (404 aa).

The tract at residues 1–56 (MPYNCCLPAMSCRTSCSSRPCVPPSCHGCTLPGACNIPANVGNCNWFCEGSFNGNE) is head. An IF rod domain is found at 56-367 (EKETMQFLND…GLLESEDCKL (312 aa)). A coil 1A region spans residues 57–91 (KETMQFLNDRLASYMEKVRQLERENAELECRIQER). The linker 1 stretch occupies residues 92–102 (NQQQDPLVCPA). Positions 103–203 (YQAYFRTIEE…HEQEVNTLRC (101 aa)) are coil 1B. The tract at residues 204-219 (QLGDRLNVEVDAAPTV) is linker 12. Positions 220–363 (DLNRVLNETR…NTYRGLLESE (144 aa)) are coil 2. Residues 364–404 (DCKLPCNPCATTNACDKPIGPCVPNPCVTRPRCGPCNTFVR) are tail.

Belongs to the intermediate filament family.

In Mus musculus (Mouse), this protein is Keratin, type I cuticular Ha3-I.